Here is an 86-residue protein sequence, read N- to C-terminus: UPF0457 protein SSP0714 (86 aa).

The protein belongs to the UPF0457 family.

The sequence is that of UPF0457 protein SSP0714 from Staphylococcus saprophyticus subsp. saprophyticus (strain ATCC 15305 / DSM 20229 / NCIMB 8711 / NCTC 7292 / S-41).